Here is a 425-residue protein sequence, read N- to C-terminus: Serine--tRNA ligase (425 aa).

Positions 110 to 134 (NLPSADAPEGKSEADNVEVKRWGEP) are disordered. Basic and acidic residues predominate over residues 117–134 (PEGKSEADNVEVKRWGEP). 233–235 (TAE) is an L-serine binding site. 264–266 (RRE) is an ATP binding site. Glu287 lines the L-serine pocket. 351–354 (EISS) contacts ATP. L-serine is bound at residue Ser385.

Belongs to the class-II aminoacyl-tRNA synthetase family. Type-1 seryl-tRNA synthetase subfamily. As to quaternary structure, homodimer. The tRNA molecule binds across the dimer.

It localises to the cytoplasm. It carries out the reaction tRNA(Ser) + L-serine + ATP = L-seryl-tRNA(Ser) + AMP + diphosphate + H(+). The enzyme catalyses tRNA(Sec) + L-serine + ATP = L-seryl-tRNA(Sec) + AMP + diphosphate + H(+). It functions in the pathway aminoacyl-tRNA biosynthesis; selenocysteinyl-tRNA(Sec) biosynthesis; L-seryl-tRNA(Sec) from L-serine and tRNA(Sec): step 1/1. Its function is as follows. Catalyzes the attachment of serine to tRNA(Ser). Is also able to aminoacylate tRNA(Sec) with serine, to form the misacylated tRNA L-seryl-tRNA(Sec), which will be further converted into selenocysteinyl-tRNA(Sec). This chain is Serine--tRNA ligase, found in Synechococcus sp. (strain RCC307).